We begin with the raw amino-acid sequence, 199 residues long: ATP synthase subunit b (199 aa).

The helical transmembrane segment at 5–25 (SFVTTLSVCVMILGLAALGFA) threads the bilayer.

The protein belongs to the ATPase B chain family. In terms of assembly, F-type ATPases have 2 components, F(1) - the catalytic core - and F(0) - the membrane proton channel. F(1) has five subunits: alpha(3), beta(3), gamma(1), delta(1), epsilon(1). F(0) has three main subunits: a(1), b(2) and c(10-14). The alpha and beta chains form an alternating ring which encloses part of the gamma chain. F(1) is attached to F(0) by a central stalk formed by the gamma and epsilon chains, while a peripheral stalk is formed by the delta and b chains.

The protein resides in the cell inner membrane. In terms of biological role, f(1)F(0) ATP synthase produces ATP from ADP in the presence of a proton or sodium gradient. F-type ATPases consist of two structural domains, F(1) containing the extramembraneous catalytic core and F(0) containing the membrane proton channel, linked together by a central stalk and a peripheral stalk. During catalysis, ATP synthesis in the catalytic domain of F(1) is coupled via a rotary mechanism of the central stalk subunits to proton translocation. Component of the F(0) channel, it forms part of the peripheral stalk, linking F(1) to F(0). The sequence is that of ATP synthase subunit b from Citrifermentans bemidjiense (strain ATCC BAA-1014 / DSM 16622 / JCM 12645 / Bem) (Geobacter bemidjiensis).